We begin with the raw amino-acid sequence, 92 residues long: Small ribosomal subunit protein bS20 (92 aa).

It belongs to the bacterial ribosomal protein bS20 family.

In terms of biological role, binds directly to 16S ribosomal RNA. The sequence is that of Small ribosomal subunit protein bS20 from Rickettsia africae (strain ESF-5).